The chain runs to 408 residues: S-adenosylmethionine synthase (408 aa).

Position 140–145 (140–145 (GQGSVD)) interacts with ATP.

It belongs to the AdoMet synthase 2 family. Mg(2+) is required as a cofactor.

The enzyme catalyses L-methionine + ATP + H2O = S-adenosyl-L-methionine + phosphate + diphosphate. It participates in amino-acid biosynthesis; S-adenosyl-L-methionine biosynthesis; S-adenosyl-L-methionine from L-methionine: step 1/1. Catalyzes the formation of S-adenosylmethionine from methionine and ATP. This Caldivirga maquilingensis (strain ATCC 700844 / DSM 13496 / JCM 10307 / IC-167) protein is S-adenosylmethionine synthase.